The following is a 427-amino-acid chain: MTASGRTNPYSIVSSEEDGLHLVTMSGANGFGNGKVHTRRRCRNRFVKKNGQCNIEFANMDEKSQRYLADMFTTCVDIRWRYMLLIFSLAFLASWLLFGVIFWVIAVAHGDLEPAEAHGRTPCVLQVHGFMAAFLFSIETQTTIGYGLRCVTEECPVAVFMVVAQSIVGCIIDSFMIGAIMAKMARPKKRAQTLLFSHNAVVALRDGKLCLMWRVGNLRKSHIVEAHVRAQLIKPRVTEEGEYIPLDQIDIDVGFDKGLDRIFLVSPITILHEIDEASPLFGISRQDLETDDFEIVVILEGMVEATAMTTQARSSYLANEILWGHRFEPVLFEEKNQYKIDYSHFHKTYEVPSTPRCSAKDLVENKFLLPSTNSFCYENELAFLSRDEEDEVDGEQDSLGPQARRDFDRPQAGTALEQRPYRRESEI.

Topologically, residues 1 to 77 are cytoplasmic; that stretch reads MTASGRTNPY…LADMFTTCVD (77 aa). Cys-75 is modified (S-nitrosocysteine). The helical transmembrane segment at 78-104 threads the bilayer; the sequence is IRWRYMLLIFSLAFLASWLLFGVIFWV. Arg-79 and Arg-81 together coordinate a 1,2-diacyl-sn-glycero-3-phospho-(1D-myo-inositol-4,5-bisphosphate). The Extracellular portion of the chain corresponds to 105–129; the sequence is IAVAHGDLEPAEAHGRTPCVLQVHG. Cys-123 and Cys-155 form a disulfide bridge. The helical; Pore-forming intramembrane region spans 130–146; that stretch reads FMAAFLFSIETQTTIGY. 4 residues coordinate K(+): Thr-143, Ile-144, Gly-145, and Tyr-146. The Selectivity filter signature appears at 143 to 148; that stretch reads TIGYGL. Topologically, residues 147–155 are extracellular; sequence GLRCVTEEC. Residues 156–183 traverse the membrane as a helical segment; that stretch reads PVAVFMVVAQSIVGCIIDSFMIGAIMAK. A 1,2-diacyl-sn-glycero-3-phospho-(1D-myo-inositol-4,5-bisphosphate) contacts are provided by Lys-183 and Lys-188. The Cytoplasmic segment spans residues 184-427; it reads MARPKKRAQT…QRPYRRESEI (244 aa). The span at 387 to 396 shows a compositional bias: acidic residues; sequence DEEDEVDGEQ. Positions 387–427 are disordered; that stretch reads DEEDEVDGEQDSLGPQARRDFDRPQAGTALEQRPYRRESEI. The PDZ-binding motif lies at 425 to 427; that stretch reads SEI.

This sequence belongs to the inward rectifier-type potassium channel (TC 1.A.2.1) family. KCNJ12 subfamily. As to quaternary structure, homotetramer. Forms heteromer with KCNJ4. Association, via its PDZ-recognition domain, with LIN7A, LIN7B, LIN7C, DLG1, CASK and APBA1 plays a key role in its localization and trafficking.

It localises to the membrane. The enzyme catalyses K(+)(in) = K(+)(out). With respect to regulation, activated by phosphatidylinositol 4,5-biphosphate (PtdIns(4,5)P2). PtdIns(4,5)P2 binding to the cytoplasmic side of the channel triggers a conformation change leading to channel opening. In terms of biological role, inward rectifying potassium channel that probably participates in controlling the resting membrane potential in electrically excitable cells. Probably participates in establishing action potential waveform and excitability of neuronal and muscle tissues. Inward rectifier potassium channels are characterized by a greater tendency to allow potassium to flow into the cell rather than out of it. Their voltage dependence is regulated by the concentration of extracellular potassium; as external potassium is raised, the voltage range of the channel opening shifts to more positive voltages. The inward rectification is mainly due to the blockage of outward current by internal magnesium. This chain is ATP-sensitive inward rectifier potassium channel 12 (KCNJ12), found in Bos taurus (Bovine).